Reading from the N-terminus, the 310-residue chain is Probable manganese-dependent inorganic pyrophosphatase (310 aa).

Mn(2+) is bound by residues His9, Asp13, Asp15, Asp76, His98, and Asp150.

It belongs to the PPase class C family. The cofactor is Mn(2+).

The protein localises to the cytoplasm. The enzyme catalyses diphosphate + H2O = 2 phosphate + H(+). The sequence is that of Probable manganese-dependent inorganic pyrophosphatase from Streptococcus thermophilus (strain CNRZ 1066).